The following is a 101-amino-acid chain: Integration host factor subunit alpha (101 aa).

This sequence belongs to the bacterial histone-like protein family. Heterodimer of an alpha and a beta chain.

Functionally, this protein is one of the two subunits of integration host factor, a specific DNA-binding protein that functions in genetic recombination as well as in transcriptional and translational control. The polypeptide is Integration host factor subunit alpha (Halorhodospira halophila (strain DSM 244 / SL1) (Ectothiorhodospira halophila (strain DSM 244 / SL1))).